Consider the following 242-residue polypeptide: 2-C-methyl-D-erythritol 4-phosphate cytidylyltransferase (242 aa).

The protein belongs to the IspD/TarI cytidylyltransferase family. IspD subfamily.

It catalyses the reaction 2-C-methyl-D-erythritol 4-phosphate + CTP + H(+) = 4-CDP-2-C-methyl-D-erythritol + diphosphate. The protein operates within isoprenoid biosynthesis; isopentenyl diphosphate biosynthesis via DXP pathway; isopentenyl diphosphate from 1-deoxy-D-xylulose 5-phosphate: step 2/6. Functionally, catalyzes the formation of 4-diphosphocytidyl-2-C-methyl-D-erythritol from CTP and 2-C-methyl-D-erythritol 4-phosphate (MEP). The sequence is that of 2-C-methyl-D-erythritol 4-phosphate cytidylyltransferase from Halorhodospira halophila (strain DSM 244 / SL1) (Ectothiorhodospira halophila (strain DSM 244 / SL1)).